The chain runs to 266 residues: Undecaprenyl-diphosphatase (266 aa).

The next 8 membrane-spanning stretches (helical) occupy residues 1-21, 39-59, 86-106, 117-137, 153-173, 190-210, 216-236, and 246-266; these read MDFLKFIFYGIIQGLTEFIPV, PGSSLSAIIQIGSVLAIFWYF, SIFIGTIPIVLIGGIVKLFVT, FSIAVVSILMSLIMFLADIST, FIGISQAFAIIPGVSRSGATI, SFLLGIPSISLAAFVEFITSI, FPFLPLFVGLITTFFSSLLAI, and NGLKIFIYYRLVFGILIILNL.

This sequence belongs to the UppP family.

It is found in the cell inner membrane. The catalysed reaction is di-trans,octa-cis-undecaprenyl diphosphate + H2O = di-trans,octa-cis-undecaprenyl phosphate + phosphate + H(+). Its function is as follows. Catalyzes the dephosphorylation of undecaprenyl diphosphate (UPP). Confers resistance to bacitracin. This chain is Undecaprenyl-diphosphatase, found in Prochlorococcus marinus (strain MIT 9515).